A 482-amino-acid chain; its full sequence is Cardiolipin synthase (482 aa).

The next 2 membrane-spanning stretches (helical) occupy residues 4-24 (LAYLLVILLILNVFFAAVTVF) and 34-54 (WAWLLVLTFVPIFGFIIYLIF). PLD phosphodiesterase domains lie at 217-244 (LNYRNHRKLAIIDGDVGYIGGFNIGDEY) and 395-422 (DNGFIHAKTLVVDGEIASVGTANMDFRS). Residues histidine 222, lysine 224, aspartate 229, histidine 400, lysine 402, and aspartate 407 contribute to the active site.

It belongs to the phospholipase D family. Cardiolipin synthase subfamily.

It is found in the cell membrane. The catalysed reaction is 2 a 1,2-diacyl-sn-glycero-3-phospho-(1'-sn-glycerol) = a cardiolipin + glycerol. Functionally, catalyzes the reversible phosphatidyl group transfer from one phosphatidylglycerol molecule to another to form cardiolipin (CL) (diphosphatidylglycerol) and glycerol. This chain is Cardiolipin synthase (cls), found in Listeria monocytogenes serotype 4a (strain HCC23).